We begin with the raw amino-acid sequence, 342 residues long: Heat-inducible transcription repressor HrcA (342 aa).

It belongs to the HrcA family.

Its function is as follows. Negative regulator of class I heat shock genes (grpE-dnaK-dnaJ and groELS operons). Prevents heat-shock induction of these operons. This chain is Heat-inducible transcription repressor HrcA, found in Mesoplasma florum (strain ATCC 33453 / NBRC 100688 / NCTC 11704 / L1) (Acholeplasma florum).